The sequence spans 457 residues: Multidrug resistance protein MdtK (457 aa).

12 helical membrane passes run 11–31, 53–73, 93–113, 127–147, 160–180, 188–208, 243–263, 276–296, 316–336, 357–377, 387–407, and 416–436; these read LLALGIPVIIAQFSQTAMGVV, IWLPTILLGQGILMALTPIVA, WLATFLSIMVIAILYNSRFII, AIGFIHAIMWGAPGCLYYQVL, GMIIGFIGLLINIPVNYAFIY, LGGIGCGVATASVFWAMFLMM, LPVGLALFFEVTLFAVVALLV, IALNFSSLMFMFPLSLGIAAT, ITALAVGLMLASCTAIFSIIF, LMLFAALYQLSDSVQVIGSGV, IFFITFIAYWVIGLPSGYLLG, and MGPAGFWIGFILGLTASAIMM.

The protein belongs to the multi antimicrobial extrusion (MATE) (TC 2.A.66.1) family. MdtK subfamily.

It is found in the cell inner membrane. Multidrug efflux pump that functions probably as a Na(+)/drug antiporter. This chain is Multidrug resistance protein MdtK, found in Proteus mirabilis (strain HI4320).